A 179-amino-acid polypeptide reads, in one-letter code: Interleukin-22 (179 aa).

The signal sequence occupies residues 1–33 (MAALQKSVSSFLMGTLATSCLLLLALLVQGGAA). 2 disulfides stabilise this stretch: Cys40/Cys132 and Cys89/Cys178. 3 N-linked (GlcNAc...) asparagine glycosylation sites follow: Asn54, Asn68, and Asn97.

This sequence belongs to the IL-10 family.

It is found in the secreted. Its function is as follows. Cytokine that plays a critical role in modulating tissue responses during inflammation. Plays an essential role in the regeneration of epithelial cells to maintain barrier function after injury and for the prevention of further tissue damage. Unlike most of the cytokines, has no effect on immune cells. Signals through a heterodimeric receptor composed of two subunits, the specific receptor IL22RA1 which is present on non-immune cells in many organs and the shared subunit IL10RB. Ligation of IL22RA1 with IL22 induces activation of the tyrosine kinases JAK1 and TYK2, which in turn activates STAT3. In turn, promotes cell survival and proliferation through STAT3, ERK1/2 and PI3K/AKT pathways. Promotes phosphorylation of GSK3B at 'Ser-9' and CTTN. Promotes epithelial cell spreading. The chain is Interleukin-22 (IL22) from Homo sapiens (Human).